A 32-amino-acid polypeptide reads, in one-letter code: Delta-actitoxin-Eqd1a (32 aa).

This sequence belongs to the sea anemone short toxin (type III) family. Post-translationally, contains 4 disulfide bonds.

The protein resides in the secreted. It is found in the nematocyst. Its function is as follows. Binds specifically to sodium channels (Nav) of the axonal membrane of crayfish and prolongs the falling phase of the action potential. It also increases the maximum rates of rise of both action potential and resting potential. Is only active on crustaceans. This is Delta-actitoxin-Eqd1a from Entacmaea quadricolor (Bubble-tip anemone).